Here is a 142-residue protein sequence, read N- to C-terminus: Relaxin-3 (142 aa).

The first 25 residues, 1–25, serve as a signal peptide directing secretion; the sequence is MARYKLLLLLAVWVLTGELWPGAEA. Intrachain disulfides connect C35-C129, C47-C142, and C128-C133. Positions 55-118 are cleaved as a propeptide — connecting peptide; sequence SDILAHEAMG…GTPGALRGSR (64 aa).

The protein belongs to the insulin family. As to quaternary structure, heterodimer of a B chain and an A chain linked by two disulfide bonds.

The protein resides in the secreted. Its function is as follows. May play a role in neuropeptide signaling processes. Ligand for LGR7, RXFP3 and RXFP4. The polypeptide is Relaxin-3 (RLN3) (Pan troglodytes (Chimpanzee)).